The chain runs to 348 residues: Ribosomal RNA small subunit methyltransferase C (348 aa).

Belongs to the methyltransferase superfamily. RsmC family. In terms of assembly, monomer.

The protein localises to the cytoplasm. It carries out the reaction guanosine(1207) in 16S rRNA + S-adenosyl-L-methionine = N(2)-methylguanosine(1207) in 16S rRNA + S-adenosyl-L-homocysteine + H(+). Its function is as follows. Specifically methylates the guanine in position 1207 of 16S rRNA in the 30S particle. This is Ribosomal RNA small subunit methyltransferase C from Pectobacterium atrosepticum (strain SCRI 1043 / ATCC BAA-672) (Erwinia carotovora subsp. atroseptica).